The following is a 636-amino-acid chain: 1-phosphatidylinositol 4,5-bisphosphate phosphodiesterase zeta-1 (636 aa).

The EF-hand domain maps to 35–70; it reads CNTIHVKCIFKDNDRLKQGRITIEEFRTIYRIIAHR. One can recognise a PI-PLC X-box domain in the interval 155 to 299; sequence QDMTHPLSDY…LKFKILVRNK (145 aa). Catalysis depends on residues His-170 and His-215. The interval 311–338 is disordered; it reads KGFDKHGQVQECEEEEEAEQEEEENEVR. A coiled-coil region spans residues 318-345; the sequence is QVQECEEEEEAEQEEEENEVRDSEILDI. Residues 321–336 show a composition bias toward acidic residues; that stretch reads ECEEEEEAEQEEEENE. Positions 375–491 constitute a PI-PLC Y-box domain; the sequence is LSDLVIYTKV…GYILKPHFLR (117 aa). The C2 domain maps to 491 to 617; that stretch reads RDGKSIFNPN…KGYRRVPLFS (127 aa).

As to quaternary structure, interacts via its C2 domain with PtdIns(3)P and, to a lesser extent, PtdIns(5)P in vitro. Requires Ca(2+) as cofactor. Expressed specifically in testis.

It localises to the nucleus. It is found in the cytoplasm. Its subcellular location is the perinuclear region. It catalyses the reaction a 1,2-diacyl-sn-glycero-3-phospho-(1D-myo-inositol-4,5-bisphosphate) + H2O = 1D-myo-inositol 1,4,5-trisphosphate + a 1,2-diacyl-sn-glycerol + H(+). In terms of biological role, the production of the second messenger molecules diacylglycerol (DAG) and inositol 1,4,5-trisphosphate (IP3) is mediated by activated phosphatidylinositol-specific phospholipase C enzymes. In vitro, hydrolyzes PtdIns(4,5)P2 in a Ca(2+)-dependent manner. Triggers intracellular Ca(2+) oscillations in oocytes solely during M phase and is involved in inducing oocyte activation and initiating embryonic development up to the blastocyst stage. Is therefore a strong candidate for the egg-activating soluble sperm factor that is transferred from the sperm into the egg cytoplasm following gamete membrane fusion. May exert an inhibitory effect on phospholipase-C-coupled processes that depend on calcium ions and protein kinase C, including CFTR trafficking and function. In Sus scrofa (Pig), this protein is 1-phosphatidylinositol 4,5-bisphosphate phosphodiesterase zeta-1.